We begin with the raw amino-acid sequence, 475 residues long: Probable dolichyl pyrophosphate Man9GlcNAc2 alpha-1,3-glucosyltransferase (475 aa).

The next 8 membrane-spanning stretches (helical) occupy residues 114-133 (VVSA…AYSL), 161-181 (GHFQ…AAIL), 235-255 (AVVL…LQAV), 296-316 (MALV…VLLF), 322-342 (VGFL…SFQV), 385-405 (LLVP…CFDS), 418-438 (IANI…TVPA), and 441-461 (KYPD…FFLF).

Belongs to the ALG6/ALG8 glucosyltransferase family.

The protein resides in the endoplasmic reticulum membrane. It carries out the reaction an alpha-D-Man-(1-&gt;2)-alpha-D-Man-(1-&gt;2)-alpha-D-Man-(1-&gt;3)-[alpha-D-Man-(1-&gt;2)-alpha-D-Man-(1-&gt;3)-[alpha-D-Man-(1-&gt;2)-alpha-D-Man-(1-&gt;6)]-alpha-D-Man-(1-&gt;6)]-beta-D-Man-(1-&gt;4)-beta-D-GlcNAc-(1-&gt;4)-alpha-D-GlcNAc-diphospho-di-trans,poly-cis-dolichol + a di-trans,poly-cis-dolichyl beta-D-glucosyl phosphate = an alpha-D-Glc-(1-&gt;3)-alpha-D-Man-(1-&gt;2)-alpha-D-Man-(1-&gt;2)-alpha-D-Man-(1-&gt;3)-[alpha-D-Man-(1-&gt;2)-alpha-D-Man-(1-&gt;3)-[alpha-D-Man-(1-&gt;2)-alpha-D-Man-(1-&gt;6)]-alpha-D-Man-(1-&gt;6)]-beta-D-Man-(1-&gt;4)-beta-D-GlcNAc-(1-&gt;4)-alpha-D-GlcNAc-diphospho-di-trans,poly-cis-dolichol + a di-trans,poly-cis-dolichyl phosphate + H(+). Its pathway is protein modification; protein glycosylation. Its function is as follows. Adds the first glucose residue to the lipid-linked oligosaccharide precursor for N-linked glycosylation. Transfers glucose from dolichyl phosphate glucose (Dol-P-Glc) onto the lipid-linked oligosaccharide Man(9)GlcNAc(2)-PP-Dol. Involved in cuticle differentiation. The polypeptide is Probable dolichyl pyrophosphate Man9GlcNAc2 alpha-1,3-glucosyltransferase (gny) (Drosophila melanogaster (Fruit fly)).